We begin with the raw amino-acid sequence, 351 residues long: Pinopsin (351 aa).

Topologically, residues 1–30 are extracellular; that stretch reads MSSNSSQAPPNGTPGPFDGPQWPYQAPQST. N-linked (GlcNAc...) asparagine glycosylation occurs at asparagine 4. A helical membrane pass occupies residues 31–55; it reads YVGVAVLMGTVVACASVVNGLVIVV. Topologically, residues 56–67 are cytoplasmic; that stretch reads SICYKKLRSPLN. Residues 68–92 traverse the membrane as a helical segment; sequence YILVNLAVADLLVTLCGSSVSLSNN. At 93–107 the chain is on the extracellular side; the sequence is INGFFVFGRRMCELE. Cysteines 104 and 181 form a disulfide. A helical membrane pass occupies residues 108–127; sequence GFMVSLTGIVGLWSLAILAL. Residues 128–146 lie on the Cytoplasmic side of the membrane; the sequence is ERYVVVCKPLGDFQFQRRH. The helical transmembrane segment at 147–170 threads the bilayer; the sequence is AVSGCAFTWGWALLWSAPPLLGWS. The Extracellular portion of the chain corresponds to 171-194; sequence SYVPEGLRTSCGPNWYTGGSNNNS. An N-linked (GlcNAc...) asparagine glycan is attached at asparagine 192. The helical transmembrane segment at 195–222 threads the bilayer; that stretch reads YILSLFVTCFVLPLSLILFSYTNLLLTL. Topologically, residues 223 to 244 are cytoplasmic; sequence RAAAAQQKEADTTQRAEREVTR. A helical membrane pass occupies residues 245–268; it reads MVIVMVMAFLLCWLPYSTFALVVA. At 269–276 the chain is on the extracellular side; the sequence is THKGIIIQ. Residues 277–301 traverse the membrane as a helical segment; the sequence is PVLASLPSYFSKTATVYNPIIYVFM. N6-(retinylidene)lysine is present on lysine 288. Topologically, residues 302-351 are cytoplasmic; that stretch reads NKQFQSCLLEMLCCGYQPQRTGKASPGTPGPHADVTAAGLRNKVMPAHPV. 2 S-palmitoyl cysteine lipidation sites follow: cysteine 314 and cysteine 315.

It belongs to the G-protein coupled receptor 1 family. Opsin subfamily. Post-translationally, phosphorylated on some or all of the serine and threonine residues present in the C-terminal region. As to expression, pineal gland.

Its subcellular location is the membrane. In terms of biological role, produces a slow and prolonged phototransduction response consistent with the non-visual function of pineal photoreception. This Gallus gallus (Chicken) protein is Pinopsin.